We begin with the raw amino-acid sequence, 76 residues long: Small ribosomal subunit protein bS18 (76 aa).

It belongs to the bacterial ribosomal protein bS18 family. As to quaternary structure, part of the 30S ribosomal subunit. Forms a tight heterodimer with protein bS6.

In terms of biological role, binds as a heterodimer with protein bS6 to the central domain of the 16S rRNA, where it helps stabilize the platform of the 30S subunit. This Marinobacter nauticus (strain ATCC 700491 / DSM 11845 / VT8) (Marinobacter aquaeolei) protein is Small ribosomal subunit protein bS18.